The primary structure comprises 667 residues: MTLLESIEGPEDLKGLDAAAMEQLAGEIRDFLISHVSATGGHLGPNLGVVELTLAVHRVFSSPRDSVVFDTGHQSYVHKLLTGRQDFDTLRQEGGLAGYPSRAESEHDIVESSHASSSLSWADGISRGYALTGQHDRHTVAVIGDGALTGGMAWEAVNNIASDRDRKVVIVVNDNGRSYAPTVGGFANHLKDLQASVQQGVDAVRTDRRYEQTLAKAKHLLTASGHLGQAVYRGLHGMKQGIKDVVIPQGIFEDLGMKYVGPVDGHDLAAMEQALTNARNFGGPVIVHAITEKGHGYLPARLDENDQFHSVPVIDPATGKPTGAASARTWTHVFRDEIAAIADERPDVVGITGAMLIPMGLQKMQLAHPERVVDVGIAEQHALTMAAGMAFSGLHPVVGLYATFLNRGFDQLLMDVALHHAGVTVVLDRAGVTGPDGPSHHGMWDLALLQIVPGLHLAAPRDEATMVEELREAVAVSDAPTVVRYPKGAVGAPLPALERFPDGVDVLARNGEAGGPQGEQRDVLIVGVGAMCVTALEVSERLAAHGVSSTVLDPRWVLPVADSVVRTAARHRIVVVIEDGVRAGGIGSLIRQQMRAQGVDTALNEVGLPTEFLEHASRDQILEHTGVTAQRIAQDTLASVLGTRVPYARPAHDDAAAPVSSSGPEPR.

Thiamine diphosphate-binding positions include His73 and 113–115; that span reads SHA. Asp145 contacts Mg(2+). Residues 146–147, Asn175, Tyr297, and Glu379 each bind thiamine diphosphate; that span reads GA. Asn175 lines the Mg(2+) pocket.

It belongs to the transketolase family. DXPS subfamily. In terms of assembly, homodimer. Mg(2+) serves as cofactor. Requires thiamine diphosphate as cofactor.

The catalysed reaction is D-glyceraldehyde 3-phosphate + pyruvate + H(+) = 1-deoxy-D-xylulose 5-phosphate + CO2. It participates in metabolic intermediate biosynthesis; 1-deoxy-D-xylulose 5-phosphate biosynthesis; 1-deoxy-D-xylulose 5-phosphate from D-glyceraldehyde 3-phosphate and pyruvate: step 1/1. Functionally, catalyzes the acyloin condensation reaction between C atoms 2 and 3 of pyruvate and glyceraldehyde 3-phosphate to yield 1-deoxy-D-xylulose-5-phosphate (DXP). The polypeptide is 1-deoxy-D-xylulose-5-phosphate synthase (Kocuria rhizophila (strain ATCC 9341 / DSM 348 / NBRC 103217 / DC2201)).